The following is a 444-amino-acid chain: Protein translocase subunit SecY (444 aa).

10 consecutive transmembrane segments (helical) span residues 24–44 (FFVI…IPGI), 77–97 (ILAL…LLTV), 123–143 (GTLV…PNMV), 153–173 (MFTL…MWLG), 181–201 (IGNG…PKAI), 215–235 (VLLL…VVFM), 269–289 (MAGV…GTLA), 318–338 (YVML…ALVF), 376–396 (LAGA…MVAW), and 400–420 (FYFG…FMAQ).

Belongs to the SecY/SEC61-alpha family. In terms of assembly, component of the Sec protein translocase complex. Heterotrimer consisting of SecY, SecE and SecG subunits. The heterotrimers can form oligomers, although 1 heterotrimer is thought to be able to translocate proteins. Interacts with the ribosome. Interacts with SecDF, and other proteins may be involved. Interacts with SecA.

Its subcellular location is the cell inner membrane. Its function is as follows. The central subunit of the protein translocation channel SecYEG. Consists of two halves formed by TMs 1-5 and 6-10. These two domains form a lateral gate at the front which open onto the bilayer between TMs 2 and 7, and are clamped together by SecE at the back. The channel is closed by both a pore ring composed of hydrophobic SecY resides and a short helix (helix 2A) on the extracellular side of the membrane which forms a plug. The plug probably moves laterally to allow the channel to open. The ring and the pore may move independently. In Vibrio cholerae serotype O1 (strain ATCC 39315 / El Tor Inaba N16961), this protein is Protein translocase subunit SecY.